The sequence spans 83 residues: Cytochrome b559 subunit alpha (83 aa).

The helical transmembrane segment at Val-21–Trp-35 threads the bilayer. A heme-binding site is contributed by His-23.

Belongs to the PsbE/PsbF family. As to quaternary structure, heterodimer of an alpha subunit and a beta subunit. PSII is composed of 1 copy each of membrane proteins PsbA, PsbB, PsbC, PsbD, PsbE, PsbF, PsbH, PsbI, PsbJ, PsbK, PsbL, PsbM, PsbT, PsbX, PsbY, PsbZ, Psb30/Ycf12, at least 3 peripheral proteins of the oxygen-evolving complex and a large number of cofactors. It forms dimeric complexes. Heme b is required as a cofactor.

It localises to the plastid membrane. Functionally, this b-type cytochrome is tightly associated with the reaction center of photosystem II (PSII). PSII is a light-driven water:plastoquinone oxidoreductase that uses light energy to abstract electrons from H(2)O, generating O(2) and a proton gradient subsequently used for ATP formation. It consists of a core antenna complex that captures photons, and an electron transfer chain that converts photonic excitation into a charge separation. This is Cytochrome b559 subunit alpha from Cuscuta reflexa (Southern Asian dodder).